Consider the following 180-residue polypeptide: SPbeta prophage-derived uncharacterized protein YosC (180 aa).

This is SPbeta prophage-derived uncharacterized protein YosC (yosC) from Bacillus subtilis (strain 168).